The primary structure comprises 267 residues: Large ribosomal subunit protein uL4 (267 aa).

It belongs to the universal ribosomal protein uL4 family. Part of the 50S ribosomal subunit.

Functionally, one of the primary rRNA binding proteins, this protein initially binds near the 5'-end of the 23S rRNA. It is important during the early stages of 50S assembly. It makes multiple contacts with different domains of the 23S rRNA in the assembled 50S subunit and ribosome. Its function is as follows. Forms part of the polypeptide exit tunnel. The sequence is that of Large ribosomal subunit protein uL4 from Saccharolobus islandicus (strain Y.N.15.51 / Yellowstone #2) (Sulfolobus islandicus).